A 555-amino-acid chain; its full sequence is Cinnamate beta-D-glucosyltransferase (555 aa).

His-19 (proton acceptor) is an active-site residue. His-19 contacts an anthocyanidin. UDP-alpha-D-glucose is bound by residues Gln-344, His-359, Trp-362, Asn-363, Ser-364, and Glu-367. Gly-382 serves as a coordination point for an anthocyanidin. UDP-alpha-D-glucose contacts are provided by Asp-383 and Gln-384.

It belongs to the UDP-glycosyltransferase family. As to expression, highest expression detected in fruit, with lower levels detected in flower and petiole. Barely detectable in leaf and root.

It catalyses the reaction (E)-cinnamate + UDP-alpha-D-glucose = 1-O-(trans-cinnamoyl)-beta-D-glucose + UDP. Functionally, broad spectrum multifunctional glucosyltransferase. Catalyzes the formation of cinnamic acid and p-coumaric acid glucose esters during fruit ripening. Accepted substrates range from derivatives of cinnamic acid and benzoic acid to heterocyclic and aliphatic compounds, resulting in the formation of O- and S-glucose esters and O-glucosides. May also be involved in detoxification of xenobiotics. This is Cinnamate beta-D-glucosyltransferase from Fragaria ananassa (Strawberry).